The following is a 305-amino-acid chain: Short-chain dehydrogenase/reductase VdtF (305 aa).

NADP(+)-binding residues include Leu-28 and Asn-98. The active-site Proton donor is Ser-192. NADP(+) contacts are provided by Tyr-206, Lys-210, and Thr-241. Tyr-206 serves as the catalytic Proton acceptor. Lys-210 functions as the Lowers pKa of active site Tyr in the catalytic mechanism.

This sequence belongs to the short-chain dehydrogenases/reductases (SDR) family.

It carries out the reaction methyl 2-[(3S)-9,10-dihydroxy-7-methoxy-1-oxo-1H,3H,4H-naphtho[2,3-c]pyran-3-yl]acetate + AH2 = semiviriditoxin + A. The catalysed reaction is 9,10-dihydroxy-7-methoxy-3-(2-oxopropyl)-1H-benzo[g]isochromen-1-one + AH2 = (3S)-9,10-dihydroxy-7-methoxy-3-(2-oxopropyl)-1H,3H,4H-naphtho[2,3-c]pyran-1-one + A. It functions in the pathway secondary metabolite biosynthesis. Functionally, short-chain dehydrogenase/reductase; part of the gene cluster that mediates the biosynthesis of viriditoxin, one of the 'classical' secondary metabolites produced by fungi and that has antibacterial activity. The first step is performed by the polyketide synthase VdtA which condenses one acetyl-CoA and 6 malonyl-CoA units to form the heptaketide monomer backbone of viriditoxin. The product of VdtA is then O-methylated on C7 by the O-methyltransferase VdtC. The O-methyl group is important for the stereoselective coupling of the monomers at the final step of viriditoxin biosynthesis. The short-chain dehydrogenase/reductase VdtF then acts as a stereospecific reductase converting the pyrone to dihydropyrone via the reduction of the C3-C4 double bond. The FAD-binding monooxygenase VdtE then converts the ketone group into a methyl-ester group to yield semi-viriditoxin. Finally, the laccase VdtB is involved in dimerization of 2 semi-viriditoxin molecules to yield the final viriditoxin. VdtB is responsible for the regioselective 6,6'-coupling of semi-viriditoxin, which yields (M)-viriditoxin and (P)-viriditoxin at a ratio of 1:2. The non-catalytic carboxylesterase-like protein VdtD affects the stereochemistical outcome of the coupling. The highly reducing polyketide synthase VdtX is not involved in viriditoxin synthesis, but might possibly play a role in the production of additional metabolites not identified yet. In Byssochlamys spectabilis (Paecilomyces variotii), this protein is Short-chain dehydrogenase/reductase VdtF.